Reading from the N-terminus, the 502-residue chain is Mannitol 2-dehydrogenase (502 aa).

37-48 (IVHVGVGGFHRA) contacts NAD(+).

It belongs to the mannitol dehydrogenase family. In terms of assembly, monomer.

It carries out the reaction D-mannitol + NAD(+) = D-fructose + NADH + H(+). Catalyzes the NAD(H)-dependent interconversion of D-fructose and D-mannitol in the mannitol metabolic pathway. In Aspergillus terreus (strain NIH 2624 / FGSC A1156), this protein is Mannitol 2-dehydrogenase.